Reading from the N-terminus, the 415-residue chain is Serine hydroxymethyltransferase (415 aa).

(6S)-5,6,7,8-tetrahydrofolate is bound by residues Leu122 and 126 to 128; that span reads GHL. The residue at position 230 (Lys230) is an N6-(pyridoxal phosphate)lysine.

Belongs to the SHMT family. In terms of assembly, homodimer. Pyridoxal 5'-phosphate serves as cofactor.

It localises to the cytoplasm. The catalysed reaction is (6R)-5,10-methylene-5,6,7,8-tetrahydrofolate + glycine + H2O = (6S)-5,6,7,8-tetrahydrofolate + L-serine. It functions in the pathway one-carbon metabolism; tetrahydrofolate interconversion. The protein operates within amino-acid biosynthesis; glycine biosynthesis; glycine from L-serine: step 1/1. Catalyzes the reversible interconversion of serine and glycine with tetrahydrofolate (THF) serving as the one-carbon carrier. This reaction serves as the major source of one-carbon groups required for the biosynthesis of purines, thymidylate, methionine, and other important biomolecules. Also exhibits THF-independent aldolase activity toward beta-hydroxyamino acids, producing glycine and aldehydes, via a retro-aldol mechanism. This chain is Serine hydroxymethyltransferase, found in Cupriavidus taiwanensis (strain DSM 17343 / BCRC 17206 / CCUG 44338 / CIP 107171 / LMG 19424 / R1) (Ralstonia taiwanensis (strain LMG 19424)).